The chain runs to 369 residues: Glutamate 5-kinase (369 aa).

Residue Lys9 coordinates ATP. Residues Ser49, Asp136, and Asn148 each coordinate substrate. Residues 168–169 and 210–216 each bind ATP; these read TD and TGGMLTK. The PUA domain maps to 275–355; it reads QGSIWVDKGA…KGVLIYRDDW (81 aa).

The protein belongs to the glutamate 5-kinase family.

The protein resides in the cytoplasm. It carries out the reaction L-glutamate + ATP = L-glutamyl 5-phosphate + ADP. It functions in the pathway amino-acid biosynthesis; L-proline biosynthesis; L-glutamate 5-semialdehyde from L-glutamate: step 1/2. Its function is as follows. Catalyzes the transfer of a phosphate group to glutamate to form L-glutamate 5-phosphate. This is Glutamate 5-kinase from Streptococcus pneumoniae (strain ATCC 700669 / Spain 23F-1).